A 342-amino-acid chain; its full sequence is Bifunctional terpene synthase Agr4 (342 aa).

Residues Asp87, Asn222, Ser226, and Glu230 each contribute to the Mg(2+) site. The DDXXD motif motif lies at 87-91 (DEVSD). The (2E,6E)-farnesyl diphosphate site is built by Arg308 and Tyr309.

The protein belongs to the terpene synthase family. It depends on Mg(2+) as a cofactor.

It catalyses the reaction (2E,6E)-farnesyl diphosphate = delta-cadinene + diphosphate. It carries out the reaction (2E,6E)-farnesyl diphosphate = gamma-muurolene + diphosphate. The enzyme catalyses (2E,6E)-farnesyl diphosphate = beta-copaene + diphosphate. The catalysed reaction is (2E)-geranyl diphosphate = beta-myrcene + diphosphate. Functionally, terpene cyclase that catalyzes the cyclization of farnesyl diphosphate (FPP) to various sesquiterpenes, including beta-copaene, alpha-cubebene, cadina-1(6),4-diene, gamma-muurolene, delta-cadinene, epizonarene, epicubenol and cubenol. Agr4 is also able to use the monoterpene precursor geranyl diphosphate (GPP) as substrates to synthesize the monoterpene beta-myrcene. Delta-cadinene is the major product of Agr4. The chain is Bifunctional terpene synthase Agr4 from Cyclocybe aegerita (Black poplar mushroom).